The following is a 217-amino-acid chain: 3,4-dihydroxy-2-butanone 4-phosphate synthase (217 aa).

D-ribulose 5-phosphate is bound by residues 37–38 (RE), Asp42, 150–154 (RGGHT), and Glu174. Glu38 serves as a coordination point for Mg(2+). His153 is a binding site for Mg(2+).

This sequence belongs to the DHBP synthase family. As to quaternary structure, homodimer. Mg(2+) serves as cofactor. It depends on Mn(2+) as a cofactor.

The enzyme catalyses D-ribulose 5-phosphate = (2S)-2-hydroxy-3-oxobutyl phosphate + formate + H(+). It functions in the pathway cofactor biosynthesis; riboflavin biosynthesis; 2-hydroxy-3-oxobutyl phosphate from D-ribulose 5-phosphate: step 1/1. Functionally, catalyzes the conversion of D-ribulose 5-phosphate to formate and 3,4-dihydroxy-2-butanone 4-phosphate. This is 3,4-dihydroxy-2-butanone 4-phosphate synthase from Proteus mirabilis (strain HI4320).